We begin with the raw amino-acid sequence, 213 residues long: Ribosomal RNA small subunit methyltransferase G (213 aa).

S-adenosyl-L-methionine is bound by residues Gly-75, Phe-80, 128 to 129, and Arg-144; that span reads IE.

Belongs to the methyltransferase superfamily. RNA methyltransferase RsmG family.

Its subcellular location is the cytoplasm. The catalysed reaction is guanosine(527) in 16S rRNA + S-adenosyl-L-methionine = N(7)-methylguanosine(527) in 16S rRNA + S-adenosyl-L-homocysteine. Functionally, specifically methylates the N7 position of guanine in position 527 of 16S rRNA. This Brucella suis biovar 1 (strain 1330) protein is Ribosomal RNA small subunit methyltransferase G.